The sequence spans 975 residues: Protein cramped (975 aa).

Disordered regions lie at residues 1–37 (MEEL…GGGA), 71–111 (QKMK…GSGK), 318–346 (AIFP…PSVA), 403–450 (PVAA…LMKM), and 809–844 (PIDR…QEPG). Pro residues predominate over residues 7–20 (QPPPPPPLPPPPSS). Residues 86–98 (SEREPNKKEEKAA) are compositionally biased toward basic and acidic residues. Residues 100–111 (KTPSQLKTGSGK) are compositionally biased toward polar residues. The region spanning 109–173 (SGKTTWTNVE…HYYQTYHKIC (65 aa)) is the SANT domain. The span at 410-425 (LRTESGSEKRSPETKK) shows a compositional bias: basic and acidic residues. A compositionally biased stretch (low complexity) spans 815-833 (GTSSGGISSSGSKPDSSMG).

This sequence belongs to the cramped family.

It localises to the nucleus. Polycomb group (Pc-G) genes are needed to maintain expression patterns of the homeotic selector genes of the Antennapedia (Antp-C) and Bithorax (Bx-C) complexes, and hence for the maintenance of segmental determination. Can act as a modifier of position effect variegation (PEV). In Drosophila sechellia (Fruit fly), this protein is Protein cramped (crm).